The following is a 102-amino-acid chain: Protein translation factor SUI1 homolog (102 aa).

Belongs to the SUI1 family.

The polypeptide is Protein translation factor SUI1 homolog (Methanococcus maripaludis (strain C5 / ATCC BAA-1333)).